The following is a 231-amino-acid chain: Demethylmenaquinone methyltransferase (231 aa).

S-adenosyl-L-methionine contacts are provided by residues threonine 62, aspartate 80, 102–103 (DA), and serine 119.

This sequence belongs to the class I-like SAM-binding methyltransferase superfamily. MenG/UbiE family.

The enzyme catalyses a 2-demethylmenaquinol + S-adenosyl-L-methionine = a menaquinol + S-adenosyl-L-homocysteine + H(+). It participates in quinol/quinone metabolism; menaquinone biosynthesis; menaquinol from 1,4-dihydroxy-2-naphthoate: step 2/2. In terms of biological role, methyltransferase required for the conversion of demethylmenaquinol (DMKH2) to menaquinol (MKH2). This is Demethylmenaquinone methyltransferase from Streptomyces avermitilis (strain ATCC 31267 / DSM 46492 / JCM 5070 / NBRC 14893 / NCIMB 12804 / NRRL 8165 / MA-4680).